A 283-amino-acid polypeptide reads, in one-letter code: GDP-polyphosphate phosphotransferase (283 aa).

This sequence belongs to the polyphosphate kinase 2 (PPK2) family. Class I subfamily.

The enzyme catalyses [phosphate](n) + GTP = [phosphate](n+1) + GDP. Its function is as follows. Uses inorganic polyphosphate (polyP) as a donor to convert GDP to GTP. This Mycolicibacterium smegmatis (strain ATCC 700084 / mc(2)155) (Mycobacterium smegmatis) protein is GDP-polyphosphate phosphotransferase.